Consider the following 151-residue polypeptide: 3-dehydroquinate dehydratase (151 aa).

The Proton acceptor role is filled by Tyr24. Substrate contacts are provided by Asn76, His82, and Asp89. Catalysis depends on His102, which acts as the Proton donor. Substrate contacts are provided by residues 103–104 (VS) and Arg113.

Belongs to the type-II 3-dehydroquinase family. Homododecamer.

It carries out the reaction 3-dehydroquinate = 3-dehydroshikimate + H2O. It functions in the pathway metabolic intermediate biosynthesis; chorismate biosynthesis; chorismate from D-erythrose 4-phosphate and phosphoenolpyruvate: step 3/7. Its function is as follows. Catalyzes a trans-dehydration via an enolate intermediate. The polypeptide is 3-dehydroquinate dehydratase (Afipia carboxidovorans (strain ATCC 49405 / DSM 1227 / KCTC 32145 / OM5) (Oligotropha carboxidovorans)).